An 88-amino-acid chain; its full sequence is Putative membrane protein insertion efficiency factor (88 aa).

The disordered stretch occupies residues 66–88 (DFVPPKKDKNADSEHSCKAHHHH). Positions 69–82 (PPKKDKNADSEHSC) are enriched in basic and acidic residues.

Belongs to the UPF0161 family.

It localises to the cell membrane. Its function is as follows. Could be involved in insertion of integral membrane proteins into the membrane. This Listeria monocytogenes serotype 4a (strain HCC23) protein is Putative membrane protein insertion efficiency factor.